The following is a 476-amino-acid chain: UDP-N-acetylmuramate--L-alanine ligase (476 aa).

125-131 (GTHGKTT) lines the ATP pocket.

The protein belongs to the MurCDEF family.

The protein resides in the cytoplasm. It carries out the reaction UDP-N-acetyl-alpha-D-muramate + L-alanine + ATP = UDP-N-acetyl-alpha-D-muramoyl-L-alanine + ADP + phosphate + H(+). It functions in the pathway cell wall biogenesis; peptidoglycan biosynthesis. Cell wall formation. This chain is UDP-N-acetylmuramate--L-alanine ligase, found in Histophilus somni (strain 129Pt) (Haemophilus somnus).